Consider the following 953-residue polypeptide: Scaffold attachment factor B2 (953 aa).

The segment at 1-29 (MAETLPGSGDSGPGTASLGPGVAETGTRR) is disordered. At A2 the chain carries N-acetylalanine. Residues 30–64 (LSELRVIDLRAELKKRNLDTGGNKSVLMERLKKAV) enclose the SAP domain. Phosphoserine is present on S54. Residue K65 forms a Glycyl lysine isopeptide (Lys-Gly) (interchain with G-Cter in SUMO1); alternate linkage. Residue K65 forms a Glycyl lysine isopeptide (Lys-Gly) (interchain with G-Cter in SUMO2); alternate linkage. Positions 91–114 (KGLKMEEEGTEDNGLEDDSRDGQE) are disordered. K94 is covalently cross-linked (Glycyl lysine isopeptide (Lys-Gly) (interchain with G-Cter in SUMO2)). Over residues 98–114 (EGTEDNGLEDDSRDGQE) the composition is skewed to acidic residues. A phosphoserine mark is found at S109 and S158. Glycyl lysine isopeptide (Lys-Gly) (interchain with G-Cter in SUMO2) cross-links involve residues K188 and K199. Residue T201 is modified to Phosphothreonine. The residue at position 207 (S207) is a Phosphoserine. The tract at residues 219–404 (ILGETCKSEP…KDEKGRVGSG (186 aa)) is disordered. Residues 224–233 (CKSEPVKEES) are compositionally biased toward basic and acidic residues. Residue K230 forms a Glycyl lysine isopeptide (Lys-Gly) (interchain with G-Cter in SUMO) linkage. Residues 274–285 (SESTAHAQSSKA) show a composition bias toward polar residues. The span at 292–308 (VKREPAEQPGDGERTDC) shows a compositional bias: basic and acidic residues. Residue K293 forms a Glycyl lysine isopeptide (Lys-Gly) (interchain with G-Cter in SUMO) linkage. The segment covering 318–329 (EQSSAASELAEA) has biased composition (low complexity). A compositionally biased stretch (basic and acidic residues) spans 345–358 (EARDSKEDGRKFDF). The span at 370-382 (ESSTSEGADQKMS) shows a compositional bias: polar residues. Residues K380, K385, K388, K391, and K395 each participate in a glycyl lysine isopeptide (Lys-Gly) (interchain with G-Cter in SUMO2) cross-link. Residues 383-400 (SFKEEKDIKPIIKDEKGR) show a composition bias toward basic and acidic residues. Residues 407–485 (RNLWVSGLSS…RMISVEKAKN (79 aa)) enclose the RRM domain. Phosphoserine is present on residues S507 and S513. Residues K517, K524, K525, K541, K542, and K551 each participate in a glycyl lysine isopeptide (Lys-Gly) (interchain with G-Cter in SUMO2) cross-link. Residues 525–551 (KEEKIEKKEEKKPEDIKKEEKDQDELK) show a composition bias toward basic and acidic residues. 2 disordered regions span residues 525–665 (KEEK…RLQR) and 684–953 (RERL…TRRY). The span at 555 to 564 (TNRSRVTKSG) shows a compositional bias: polar residues. Residues 567–579 (GMERTVVMDKSKG) are compositionally biased toward basic and acidic residues. Glycyl lysine isopeptide (Lys-Gly) (interchain with G-Cter in SUMO2) cross-links involve residues K578, K586, and K608. Composition is skewed to basic and acidic residues over residues 590-665 (RSKE…RLQR) and 684-820 (RERL…DSRD). An interaction with SAFB1 region spans residues 600-953 (DRKSESKEKR…PPYPHFTRRY (354 aa)). K616 participates in a covalent cross-link: Glycyl lysine isopeptide (Lys-Gly) (interchain with G-Cter in SUMO2); alternate. K616 is modified (N6-acetyllysine; alternate). The Nuclear localization signal motif lies at 713–730 (RRQQEQLRYEQERRPGRR). Phosphoserine is present on residues S787 and S832. Basic and acidic residues predominate over residues 843 to 859 (GGRDWGEHNQRLEEHQA). Residues 881 to 890 (GERGLSGPSG) show a composition bias toward gly residues. S886 carries the phosphoserine modification. Residues R897 and R903 each carry the omega-N-methylarginine modification. The segment covering 899–927 (GVAGRGGFAQGGHSQGHVVPGGGLEGGGV) has biased composition (gly residues).

As to quaternary structure, interacts with SAFB/SAFB1 and SCAM1. Interacts with isoform 2 SRPK1 and inhibits its activity. Expressed at high levels in the CNS and at low levels in the liver. Expressed in a wide number of breast cancer cell lines.

The protein localises to the cytoplasm. It is found in the nucleus. In terms of biological role, binds to scaffold/matrix attachment region (S/MAR) DNA. Can function as an estrogen receptor corepressor and can also inhibit cell proliferation. This chain is Scaffold attachment factor B2 (SAFB2), found in Homo sapiens (Human).